Reading from the N-terminus, the 292-residue chain is Bifunctional protein FolD (292 aa).

Residues 161–163 (GRS) and I231 contribute to the NADP(+) site.

This sequence belongs to the tetrahydrofolate dehydrogenase/cyclohydrolase family. Homodimer.

The enzyme catalyses (6R)-5,10-methylene-5,6,7,8-tetrahydrofolate + NADP(+) = (6R)-5,10-methenyltetrahydrofolate + NADPH. The catalysed reaction is (6R)-5,10-methenyltetrahydrofolate + H2O = (6R)-10-formyltetrahydrofolate + H(+). The protein operates within one-carbon metabolism; tetrahydrofolate interconversion. Its function is as follows. Catalyzes the oxidation of 5,10-methylenetetrahydrofolate to 5,10-methenyltetrahydrofolate and then the hydrolysis of 5,10-methenyltetrahydrofolate to 10-formyltetrahydrofolate. In Protochlamydia amoebophila (strain UWE25), this protein is Bifunctional protein FolD.